A 298-amino-acid chain; its full sequence is Thymidylate synthase (298 aa).

DUMP is bound by residues arginine 25 and 159-160 (RR). Cysteine 179 serves as the catalytic Nucleophile. Residues 200 to 203 (RSVD), asparagine 211, and 241 to 243 (HLY) each bind dUMP. A (6R)-5,10-methylene-5,6,7,8-tetrahydrofolate-binding site is contributed by aspartate 203. Alanine 297 contacts (6R)-5,10-methylene-5,6,7,8-tetrahydrofolate.

The protein belongs to the thymidylate synthase family. Bacterial-type ThyA subfamily. Homodimer.

Its subcellular location is the cytoplasm. It catalyses the reaction dUMP + (6R)-5,10-methylene-5,6,7,8-tetrahydrofolate = 7,8-dihydrofolate + dTMP. It participates in pyrimidine metabolism; dTTP biosynthesis. Its function is as follows. Catalyzes the reductive methylation of 2'-deoxyuridine-5'-monophosphate (dUMP) to 2'-deoxythymidine-5'-monophosphate (dTMP) while utilizing 5,10-methylenetetrahydrofolate (mTHF) as the methyl donor and reductant in the reaction, yielding dihydrofolate (DHF) as a by-product. This enzymatic reaction provides an intracellular de novo source of dTMP, an essential precursor for DNA biosynthesis. This is Thymidylate synthase from Cereibacter sphaeroides (strain ATCC 17023 / DSM 158 / JCM 6121 / CCUG 31486 / LMG 2827 / NBRC 12203 / NCIMB 8253 / ATH 2.4.1.) (Rhodobacter sphaeroides).